The following is a 51-amino-acid chain: Small, acid-soluble spore protein K (51 aa).

The segment at 1-51 (MRNKAKGFPNPISFNGNKANNADEHASKRPDGTTRDRPQERMRSSNHFNSL) is disordered. The span at 21–43 (NADEHASKRPDGTTRDRPQERMR) shows a compositional bias: basic and acidic residues.

The protein belongs to the SspK family.

It localises to the spore core. The protein is Small, acid-soluble spore protein K of Shouchella clausii (strain KSM-K16) (Alkalihalobacillus clausii).